Here is a 208-residue protein sequence, read N- to C-terminus: Large ribosomal subunit protein uL3 (208 aa).

Residues 123–147 (RHGQSRGPMAHGSRYHRRPGSMGPV) are disordered.

Belongs to the universal ribosomal protein uL3 family. As to quaternary structure, part of the 50S ribosomal subunit. Forms a cluster with proteins L14 and L19.

Its function is as follows. One of the primary rRNA binding proteins, it binds directly near the 3'-end of the 23S rRNA, where it nucleates assembly of the 50S subunit. This Streptococcus sanguinis (strain SK36) protein is Large ribosomal subunit protein uL3.